The following is a 58-amino-acid chain: uncharacterized protein (58 aa).

Disordered stretches follow at residues 1–20 (MKKN…MNKK) and 38–58 (IIET…KKQQ).

This is an uncharacterized protein from Bacillus subtilis (strain 168).